We begin with the raw amino-acid sequence, 462 residues long: UDP-N-acetylmuramate--L-alanine ligase (462 aa).

119 to 125 (GTHGKTT) is an ATP binding site.

Belongs to the MurCDEF family.

The protein resides in the cytoplasm. The catalysed reaction is UDP-N-acetyl-alpha-D-muramate + L-alanine + ATP = UDP-N-acetyl-alpha-D-muramoyl-L-alanine + ADP + phosphate + H(+). It participates in cell wall biogenesis; peptidoglycan biosynthesis. Functionally, cell wall formation. The chain is UDP-N-acetylmuramate--L-alanine ligase from Parabacteroides distasonis (strain ATCC 8503 / DSM 20701 / CIP 104284 / JCM 5825 / NCTC 11152).